A 586-amino-acid polypeptide reads, in one-letter code: Phosphomethylpyrimidine synthase (586 aa).

The disordered stretch occupies residues 1–58; the sequence is MKQSVSAEQIELKSSLPGSKKVYVDGPREGMKVPMREIEQSDTNGVPNPPIRVYDTSG. Residues 22–39 show a composition bias toward basic and acidic residues; that stretch reads VYVDGPREGMKVPMREIE. Residues asparagine 193, methionine 222, tyrosine 251, histidine 287, 307–309, 348–351, and glutamate 387 each bind substrate; these read SRG and DGLR. Histidine 391 contacts Zn(2+). Tyrosine 414 is a substrate binding site. A Zn(2+)-binding site is contributed by histidine 455. [4Fe-4S] cluster contacts are provided by cysteine 535, cysteine 538, and cysteine 543.

This sequence belongs to the ThiC family. [4Fe-4S] cluster serves as cofactor.

It carries out the reaction 5-amino-1-(5-phospho-beta-D-ribosyl)imidazole + S-adenosyl-L-methionine = 4-amino-2-methyl-5-(phosphooxymethyl)pyrimidine + CO + 5'-deoxyadenosine + formate + L-methionine + 3 H(+). It participates in cofactor biosynthesis; thiamine diphosphate biosynthesis. Its function is as follows. Catalyzes the synthesis of the hydroxymethylpyrimidine phosphate (HMP-P) moiety of thiamine from aminoimidazole ribotide (AIR) in a radical S-adenosyl-L-methionine (SAM)-dependent reaction. The polypeptide is Phosphomethylpyrimidine synthase (Bacillus anthracis (strain A0248)).